A 450-amino-acid chain; its full sequence is Probable glucan endo-1,3-beta-glucosidase eglC (450 aa).

The N-terminal stretch at methionine 1–alanine 18 is a signal peptide. Residue glutamate 128 is the Proton donor of the active site. An N-linked (GlcNAc...) asparagine glycan is attached at asparagine 183. Glutamate 239 serves as the catalytic Nucleophile. N-linked (GlcNAc...) asparagine glycans are attached at residues asparagine 362 and asparagine 368. Composition is skewed to low complexity over residues serine 377 to serine 395 and alanine 405 to serine 420. Positions serine 377 to serine 420 are disordered. Asparagine 427 carries GPI-anchor amidated asparagine lipidation. Positions alanine 428–leucine 450 are cleaved as a propeptide — removed in mature form.

The protein belongs to the glycosyl hydrolase 17 family. In terms of processing, the GPI-anchor is attached to the protein in the endoplasmic reticulum and serves to target the protein to the cell surface. There, the glucosamine-inositol phospholipid moiety is cleaved off and the GPI-modified mannoprotein is covalently attached via its lipidless GPI glycan remnant to the 1,6-beta-glucan of the outer cell wall layer.

It localises to the cell membrane. It is found in the secreted. The protein resides in the cell wall. The enzyme catalyses Hydrolysis of (1-&gt;3)-beta-D-glucosidic linkages in (1-&gt;3)-beta-D-glucans.. In terms of biological role, glucanases play a role in cell expansion during growth, in cell-cell fusion during mating, and in spore release during sporulation. This enzyme may be involved in beta-glucan degradation and also function biosynthetically as a transglycosylase. The protein is Probable glucan endo-1,3-beta-glucosidase eglC (eglC) of Aspergillus fumigatus (strain CBS 144.89 / FGSC A1163 / CEA10) (Neosartorya fumigata).